Consider the following 431-residue polypeptide: UDP-N-acetylmuramate--L-alanine ligase (431 aa).

108 to 114 (GAHGKST) provides a ligand contact to ATP.

The protein belongs to the MurCDEF family.

The protein resides in the cytoplasm. The catalysed reaction is UDP-N-acetyl-alpha-D-muramate + L-alanine + ATP = UDP-N-acetyl-alpha-D-muramoyl-L-alanine + ADP + phosphate + H(+). It participates in cell wall biogenesis; peptidoglycan biosynthesis. Functionally, cell wall formation. This Campylobacter jejuni subsp. jejuni serotype O:6 (strain 81116 / NCTC 11828) protein is UDP-N-acetylmuramate--L-alanine ligase.